We begin with the raw amino-acid sequence, 348 residues long: UDP-3-O-acylglucosamine N-acyltransferase (348 aa).

His-237 acts as the Proton acceptor in catalysis.

The protein belongs to the transferase hexapeptide repeat family. LpxD subfamily. As to quaternary structure, homotrimer.

It carries out the reaction a UDP-3-O-[(3R)-3-hydroxyacyl]-alpha-D-glucosamine + a (3R)-hydroxyacyl-[ACP] = a UDP-2-N,3-O-bis[(3R)-3-hydroxyacyl]-alpha-D-glucosamine + holo-[ACP] + H(+). It functions in the pathway bacterial outer membrane biogenesis; LPS lipid A biosynthesis. Its function is as follows. Catalyzes the N-acylation of UDP-3-O-acylglucosamine using 3-hydroxyacyl-ACP as the acyl donor. Is involved in the biosynthesis of lipid A, a phosphorylated glycolipid that anchors the lipopolysaccharide to the outer membrane of the cell. This chain is UDP-3-O-acylglucosamine N-acyltransferase, found in Geotalea daltonii (strain DSM 22248 / JCM 15807 / FRC-32) (Geobacter daltonii).